The following is a 598-amino-acid chain: Elongation factor 4 (598 aa).

The 183-residue stretch at 2–184 (QHIRNFSIIA…TVVRRVPPPK (183 aa)) folds into the tr-type G domain. GTP is bound by residues 14–19 (DHGKST) and 131–134 (NKID).

The protein belongs to the TRAFAC class translation factor GTPase superfamily. Classic translation factor GTPase family. LepA subfamily.

It is found in the cell inner membrane. It carries out the reaction GTP + H2O = GDP + phosphate + H(+). Required for accurate and efficient protein synthesis under certain stress conditions. May act as a fidelity factor of the translation reaction, by catalyzing a one-codon backward translocation of tRNAs on improperly translocated ribosomes. Back-translocation proceeds from a post-translocation (POST) complex to a pre-translocation (PRE) complex, thus giving elongation factor G a second chance to translocate the tRNAs correctly. Binds to ribosomes in a GTP-dependent manner. The chain is Elongation factor 4 from Aromatoleum aromaticum (strain DSM 19018 / LMG 30748 / EbN1) (Azoarcus sp. (strain EbN1)).